The chain runs to 226 residues: Nucleoside triphosphate pyrophosphatase (226 aa).

D79 functions as the Proton acceptor in the catalytic mechanism. Residues 204–226 (WSRGTSTHPTPGTSATPKPNPGA) form a disordered region. The span at 206 to 220 (RGTSTHPTPGTSATP) shows a compositional bias: polar residues.

It belongs to the Maf family. The cofactor is a divalent metal cation.

The protein localises to the cytoplasm. It carries out the reaction a ribonucleoside 5'-triphosphate + H2O = a ribonucleoside 5'-phosphate + diphosphate + H(+). The enzyme catalyses a 2'-deoxyribonucleoside 5'-triphosphate + H2O = a 2'-deoxyribonucleoside 5'-phosphate + diphosphate + H(+). Nucleoside triphosphate pyrophosphatase. May have a dual role in cell division arrest and in preventing the incorporation of modified nucleotides into cellular nucleic acids. The chain is Nucleoside triphosphate pyrophosphatase from Salinispora tropica (strain ATCC BAA-916 / DSM 44818 / JCM 13857 / NBRC 105044 / CNB-440).